The primary structure comprises 144 residues: MYLNTLAPAEGAKHSAKRLGRGIGSGLGKTGGRGHKGQKSRTGGGVRRGFEGGQMPLYRRLPKFGFTSMKAAVTAEIRLNDLTKVENNVVTLESLKAANIITKDIQFAKVVLAGEVKGAVTVRGLRVTKGAKAAIEAAGGSVEE.

A disordered region spans residues 1–53; it reads MYLNTLAPAEGAKHSAKRLGRGIGSGLGKTGGRGHKGQKSRTGGGVRRGFEGG. The segment covering 21 to 31 has biased composition (gly residues); the sequence is RGIGSGLGKTG.

It belongs to the universal ribosomal protein uL15 family. In terms of assembly, part of the 50S ribosomal subunit.

Functionally, binds to the 23S rRNA. The chain is Large ribosomal subunit protein uL15 from Mannheimia succiniciproducens (strain KCTC 0769BP / MBEL55E).